The primary structure comprises 334 residues: Cathepsin K (334 aa).

A signal peptide spans 1-19 (MLRLHWLALLVLLLPMAAA). Positions 20-119 (QLRPEPELDA…TLYVPDWSSR (100 aa)) are cleaved as a propeptide — activation peptide. The N-linked (GlcNAc...) asparagine glycan is linked to N108. 3 disulfides stabilise this stretch: C141–C182, C175–C215, and C274–C323. Residue C144 is part of the active site. Active-site residues include H281 and N301.

Belongs to the peptidase C1 family.

It catalyses the reaction Broad proteolytic activity. With small-molecule substrates and inhibitors, the major determinant of specificity is P2, which is preferably Leu, Met &gt; Phe, and not Arg.. In terms of biological role, closely involved in osteoclastic bone resorption and may participate partially in the disorder of bone remodeling. Displays potent endoprotease activity against fibrinogen at acid pH. May play an important role in extracellular matrix degradation. The sequence is that of Cathepsin K (CTSK) from Gallus gallus (Chicken).